A 229-amino-acid polypeptide reads, in one-letter code: 2-C-methyl-D-erythritol 4-phosphate cytidylyltransferase (229 aa).

The protein belongs to the IspD/TarI cytidylyltransferase family. IspD subfamily.

The enzyme catalyses 2-C-methyl-D-erythritol 4-phosphate + CTP + H(+) = 4-CDP-2-C-methyl-D-erythritol + diphosphate. Its pathway is isoprenoid biosynthesis; isopentenyl diphosphate biosynthesis via DXP pathway; isopentenyl diphosphate from 1-deoxy-D-xylulose 5-phosphate: step 2/6. Functionally, catalyzes the formation of 4-diphosphocytidyl-2-C-methyl-D-erythritol from CTP and 2-C-methyl-D-erythritol 4-phosphate (MEP). The sequence is that of 2-C-methyl-D-erythritol 4-phosphate cytidylyltransferase from Clostridium botulinum (strain Okra / Type B1).